The following is a 169-amino-acid chain: Protein-export protein SecB (169 aa).

Belongs to the SecB family. As to quaternary structure, homotetramer, a dimer of dimers. One homotetramer interacts with 1 SecA dimer.

It is found in the cytoplasm. In terms of biological role, one of the proteins required for the normal export of preproteins out of the cell cytoplasm. It is a molecular chaperone that binds to a subset of precursor proteins, maintaining them in a translocation-competent state. It also specifically binds to its receptor SecA. The sequence is that of Protein-export protein SecB from Pseudoalteromonas atlantica (strain T6c / ATCC BAA-1087).